The primary structure comprises 257 residues: Snake venom serine protease Haly-2 (257 aa).

Positions methionine 1–alanine 18 are cleaved as a signal peptide. Residues glutamine 19–leucine 24 constitute a propeptide that is removed on maturation. A Peptidase S1 domain is found at isoleucine 25–alanine 248. 6 disulfide bridges follow: cysteine 31/cysteine 162, cysteine 49/cysteine 65, cysteine 97/cysteine 255, cysteine 141/cysteine 209, cysteine 173/cysteine 188, and cysteine 199/cysteine 224. Histidine 64 serves as the catalytic Charge relay system. Asparagine 100 carries N-linked (GlcNAc...) asparagine glycosylation. Aspartate 109 (charge relay system) is an active-site residue. Serine 203 functions as the Charge relay system in the catalytic mechanism.

The protein belongs to the peptidase S1 family. Snake venom subfamily. As to quaternary structure, monomer. In terms of tissue distribution, expressed by the venom gland.

It is found in the secreted. Functionally, snake venom serine protease that may act in the hemostasis system of the prey. The sequence is that of Snake venom serine protease Haly-2 from Gloydius brevicauda (Korean slamosa snake).